A 226-amino-acid polypeptide reads, in one-letter code: N-(5'-phosphoribosyl)anthranilate isomerase (226 aa).

It belongs to the TrpF family.

The enzyme catalyses N-(5-phospho-beta-D-ribosyl)anthranilate = 1-(2-carboxyphenylamino)-1-deoxy-D-ribulose 5-phosphate. The protein operates within amino-acid biosynthesis; L-tryptophan biosynthesis; L-tryptophan from chorismate: step 3/5. The protein is N-(5'-phosphoribosyl)anthranilate isomerase (trpF) of Methanothermobacter marburgensis (strain ATCC BAA-927 / DSM 2133 / JCM 14651 / NBRC 100331 / OCM 82 / Marburg) (Methanobacterium thermoautotrophicum).